Reading from the N-terminus, the 295-residue chain is Glycine--tRNA ligase alpha subunit (295 aa).

This sequence belongs to the class-II aminoacyl-tRNA synthetase family. Tetramer of two alpha and two beta subunits.

The protein localises to the cytoplasm. The catalysed reaction is tRNA(Gly) + glycine + ATP = glycyl-tRNA(Gly) + AMP + diphosphate. This Bacillus subtilis (strain 168) protein is Glycine--tRNA ligase alpha subunit (glyQ).